Here is a 202-residue protein sequence, read N- to C-terminus: 3-isopropylmalate dehydratase small subunit (202 aa).

It belongs to the LeuD family. LeuD type 1 subfamily. Heterodimer of LeuC and LeuD.

The enzyme catalyses (2R,3S)-3-isopropylmalate = (2S)-2-isopropylmalate. Its pathway is amino-acid biosynthesis; L-leucine biosynthesis; L-leucine from 3-methyl-2-oxobutanoate: step 2/4. Functionally, catalyzes the isomerization between 2-isopropylmalate and 3-isopropylmalate, via the formation of 2-isopropylmaleate. This Blochmanniella pennsylvanica (strain BPEN) protein is 3-isopropylmalate dehydratase small subunit.